We begin with the raw amino-acid sequence, 206 residues long: LexA repressor (206 aa).

Positions 28-48 (RAEIATRLGFKSANAAEEHLK) form a DNA-binding region, H-T-H motif. Residues Ser123 and Lys160 each act as for autocatalytic cleavage activity in the active site.

Belongs to the peptidase S24 family. In terms of assembly, homodimer.

It carries out the reaction Hydrolysis of Ala-|-Gly bond in repressor LexA.. Represses a number of genes involved in the response to DNA damage (SOS response), including recA and lexA. In the presence of single-stranded DNA, RecA interacts with LexA causing an autocatalytic cleavage which disrupts the DNA-binding part of LexA, leading to derepression of the SOS regulon and eventually DNA repair. The protein is LexA repressor of Shewanella sp. (strain MR-4).